Here is a 261-residue protein sequence, read N- to C-terminus: 2-phytyl-1,4-beta-naphthoquinone methyltransferase, chloroplastic (261 aa).

Residues 1 to 30 constitute a chloroplast transit peptide; it reads MAALLGIVSPVTFTGKHPVNSRSRRRTVVK.

The protein belongs to the class I-like SAM-binding methyltransferase superfamily. MenG/UbiE family.

It localises to the plastid. The protein localises to the chloroplast. The catalysed reaction is demethylphylloquinol + S-adenosyl-L-methionine = phylloquinol + S-adenosyl-L-homocysteine + H(+). In terms of biological role, involved in the biosynthesis of phylloquinone (vitamin K1). Methyltransferase required for the conversion of 2-phytyl-1,4-beta-naphthoquinol to phylloquinol. This Arabidopsis thaliana (Mouse-ear cress) protein is 2-phytyl-1,4-beta-naphthoquinone methyltransferase, chloroplastic.